The following is a 493-amino-acid chain: 6-phosphogluconate dehydrogenase, decarboxylating (493 aa).

NADP(+) contacts are provided by residues 12 to 17 (GLAVMG), 35 to 37 (NRT), 77 to 79 (VKA), and asparagine 105. Residues asparagine 105 and 131–133 (SGG) each bind substrate. Lysine 187 serves as the catalytic Proton acceptor. 190–191 (HN) is a substrate binding site. The Proton donor role is filled by glutamate 194. The substrate site is built by tyrosine 195, lysine 266, arginine 293, arginine 456, and histidine 462.

The protein belongs to the 6-phosphogluconate dehydrogenase family. As to quaternary structure, homodimer.

It carries out the reaction 6-phospho-D-gluconate + NADP(+) = D-ribulose 5-phosphate + CO2 + NADPH. It participates in carbohydrate degradation; pentose phosphate pathway; D-ribulose 5-phosphate from D-glucose 6-phosphate (oxidative stage): step 3/3. Its function is as follows. Catalyzes the oxidative decarboxylation of 6-phosphogluconate to ribulose 5-phosphate and CO(2), with concomitant reduction of NADP to NADPH. The sequence is that of 6-phosphogluconate dehydrogenase, decarboxylating (gnd) from Dictyostelium discoideum (Social amoeba).